Consider the following 270-residue polypeptide: tRNA pseudouridine synthase A (270 aa).

D52 acts as the Nucleophile in catalysis. Residue Y110 participates in substrate binding.

This sequence belongs to the tRNA pseudouridine synthase TruA family. In terms of assembly, homodimer.

The catalysed reaction is uridine(38/39/40) in tRNA = pseudouridine(38/39/40) in tRNA. In terms of biological role, formation of pseudouridine at positions 38, 39 and 40 in the anticodon stem and loop of transfer RNAs. In Roseiflexus castenholzii (strain DSM 13941 / HLO8), this protein is tRNA pseudouridine synthase A.